Here is a 303-residue protein sequence, read N- to C-terminus: MDNNEKEKSKSELLVVTGLSGAGKSLVIQCLEDMGYFCVDNLPPVLLPKFVELMEQGNPSLRKVAIAIDLRGKELFNSLVAVVDKVKSEIDVIIDVMFLEASTEKLISRYKETRRAHPLMEQGKRSLINAINDEREHLSQIRSIANFVIDTTKLSPKELKERIRRYYEDEEFETFTINVTSFGFKHGIQMDADLVFDVRFLPNPYYVVDLRPLTGLDKDVYNYVMKWKETEIFFEKLTDLLDFMIPGYKKEGKSQLVIAIGCTGGQHRSVALAERLGNYLNEVFEYNVYVHHRDAHIESGEKK.

Residue 18-25 coordinates ATP; that stretch reads GLSGAGKS. Residue 69–72 coordinates GTP; that stretch reads DLRG.

It belongs to the RapZ-like family.

Displays ATPase and GTPase activities. This Staphylococcus aureus (strain bovine RF122 / ET3-1) protein is Nucleotide-binding protein SAB0719.